The primary structure comprises 378 residues: tRNA (guanine(26)-N(2))-dimethyltransferase (378 aa).

Residues Lys-4–Val-374 form the Trm1 methyltransferase domain. The S-adenosyl-L-methionine site is built by Arg-44, Arg-69, Asp-87, Asp-114, and Ala-115. Zn(2+) contacts are provided by Cys-246, Cys-249, Cys-263, and Cys-266.

Belongs to the class I-like SAM-binding methyltransferase superfamily. Trm1 family.

The enzyme catalyses guanosine(26) in tRNA + 2 S-adenosyl-L-methionine = N(2)-dimethylguanosine(26) in tRNA + 2 S-adenosyl-L-homocysteine + 2 H(+). Dimethylates a single guanine residue at position 26 of a number of tRNAs using S-adenosyl-L-methionine as donor of the methyl groups. The sequence is that of tRNA (guanine(26)-N(2))-dimethyltransferase from Saccharolobus islandicus (strain Y.G.57.14 / Yellowstone #1) (Sulfolobus islandicus).